The chain runs to 484 residues: Dynein regulatory complex subunit 2 (484 aa).

Coiled-coil stretches lie at residues 92–160 and 374–403; these read VDCK…RKTI and KEQE…GMEN.

This sequence belongs to the DRC2 family. As to quaternary structure, component of the nexin-dynein regulatory complex (N-DRC). Interacts with DRC1.

Its subcellular location is the cytoplasm. The protein localises to the cytoskeleton. The protein resides in the flagellum basal body. It localises to the cell projection. It is found in the cilium. Its subcellular location is the flagellum. The protein localises to the flagellum axoneme. Component of the nexin-dynein regulatory complex (N-DRC), a key regulator of ciliary/flagellar motility which maintains the alignment and integrity of the distal axoneme and regulates microtubule sliding in motile axonemes. Plays a critical role in the assembly of N-DRC and also stabilizes the assembly of multiple inner dynein arms and radial spokes. Coassembles with DRC1 to form a central scaffold needed for assembly of the N-DRC and its attachment to the outer doublet microtubules. This is Dynein regulatory complex subunit 2 (CCDC65) from Macaca fascicularis (Crab-eating macaque).